The chain runs to 510 residues: RNA-splicing ligase RtcB homolog (510 aa).

Mn(2+) is bound by residues aspartate 124, cysteine 127, histidine 232, histidine 264, and histidine 358. A GMP-binding site is contributed by 231-235 (NHYAE). GMP contacts are provided by residues 358-359 (HN), 407-410 (GGTM), serine 414, 433-436 (HGAG), and lysine 509. The GMP-histidine intermediate role is filled by histidine 433.

It belongs to the RtcB family. In terms of assembly, catalytic component of the tRNA-splicing ligase complex. Mn(2+) is required as a cofactor.

The enzyme catalyses a 3'-end 3'-phospho-ribonucleotide-RNA + a 5'-end dephospho-ribonucleoside-RNA + GTP = a ribonucleotidyl-ribonucleotide-RNA + GMP + diphosphate. The catalysed reaction is a 3'-end 2',3'-cyclophospho-ribonucleotide-RNA + a 5'-end dephospho-ribonucleoside-RNA + GTP + H2O = a ribonucleotidyl-ribonucleotide-RNA + GMP + diphosphate + H(+). Catalytic subunit of the tRNA-splicing ligase complex that acts by directly joining spliced tRNA halves to mature-sized tRNAs by incorporating the precursor-derived splice junction phosphate into the mature tRNA as a canonical 3',5'-phosphodiester. May act as an RNA ligase with broad substrate specificity, and may function toward other RNAs. This Trichoplax adhaerens (Trichoplax reptans) protein is RNA-splicing ligase RtcB homolog.